A 539-amino-acid chain; its full sequence is Phenylacetyl-CoA ligase epaB (539 aa).

188–199 contacts AMP; that stretch reads RLFSSGTTGLPK. Positions 449–525 are AMP-binding; that stretch reads EVEGVLRNHP…DAIPRNASGK (77 aa).

Belongs to the ATP-dependent AMP-binding enzyme family.

It functions in the pathway secondary metabolite biosynthesis. Functionally, phenylacetyl-CoA ligase; part of the gene cluster that mediates the biosynthesis of nigerpyrone and its derivatives carbonarone A and pestalamide A. The biosynthesis pathway begins with the polyketide assembly by epaA to form phenylacetyl triketide precursor from successive condensation of two malonyl-CoA, presumably with one phenylacetyl-CoA starter unit produced by the phenylacetyl-CoA ligase epaB. For the nigerpyrone biosynthesis, the reactive polyketide chain is released as an aldehyde through the R-domain. A nonenzymatic cyclization and dehydration may create nigerpyrone. For the biosynthesis of carbonarone A and pestalamide A, an extra methyl group is added through the C-methyltransferase domain. Several further steps involving the dehydrogenase orf1, the cytochrome P450 monooxygenase orf2 and the FAD-dependent monooxygenase orf3 are required to form a carbonarone A precursor which is converted to carbonarone A via cyclization. The O-acetyltransferase epaC could catalyze the transfer of 2-methylsuccinyl-CoA, a common intermediate in the ethylmalonyl-CoA pathway, to generate the final product pestalamide A. In Aspergillus niger (strain ATCC MYA-4892 / CBS 513.88 / FGSC A1513), this protein is Phenylacetyl-CoA ligase epaB.